The primary structure comprises 456 residues: MTLYEFFLNQKLVYQSSPHFNGVFLTILEHYGFQFKTIDKLWKSKLLITSELTDKIKQQLKCYFIEKIPLPYLLGTIQLRKLTFKTKKGVFIPRIDSLALIASVNLKKIKTALDLCCGSGTLAIALKKKCDTLDVYGSDIDIQALKLAQQNALINNVSINWIEADWFDCFNKIKTPIDLIVTNPPYLKKTQLNKTLNYEPKHSLVFQNKNSYFAYKQLFNLLLTKRSIKQLIFECSLFQKERLLNLFSIFKSRPIFNFQKQFIGMKVDNQKLPVVDIKNTKTIKQLLKMGLAGIVNTDTQMGLISYSESTLDKIKQRALNKHYVSMFGLEELKKLPKKLQQIASYFWPGSYTFIKNNKSYRVPKNLGLLNLFNAIGRVFCTSANISNQKPYTKLSDYQNDSYWIKQPCFIIRSTSKVQSNNTPSLVYNLDTKQLVRTTAKQTKQFHKLITKHQLAI.

The YrdC-like domain occupies Ile-277 to Lys-440.

This is an uncharacterized protein from Mycoplasma genitalium (strain ATCC 33530 / DSM 19775 / NCTC 10195 / G37) (Mycoplasmoides genitalium).